The sequence spans 659 residues: Oligopeptide-binding protein AmiA (659 aa).

A signal peptide spans 1–22 (MKKNRVFATAGLVLLAAGVLAA). A lipid anchor (N-palmitoyl cysteine) is attached at C23. C23 carries the S-diacylglycerol cysteine lipid modification.

Belongs to the bacterial solute-binding protein 5 family.

The protein localises to the cell membrane. In terms of biological role, part of the binding-protein-dependent transport system for oligopeptides; probably an oligopeptide binding protein. This Streptococcus pneumoniae serotype 4 (strain ATCC BAA-334 / TIGR4) protein is Oligopeptide-binding protein AmiA (amiA).